The following is a 441-amino-acid chain: Tubulin alpha chain (441 aa).

8 residues coordinate GTP: Gln-11, Glu-68, Ser-137, Gly-141, Thr-142, Thr-176, Asn-203, and Asn-224. Position 68 (Glu-68) interacts with Mg(2+). The active site involves Glu-250.

This sequence belongs to the tubulin family. As to quaternary structure, dimer of alpha and beta chains. A typical microtubule is a hollow water-filled tube with an outer diameter of 25 nm and an inner diameter of 15 nM. Alpha-beta heterodimers associate head-to-tail to form protofilaments running lengthwise along the microtubule wall with the beta-tubulin subunit facing the microtubule plus end conferring a structural polarity. Microtubules usually have 13 protofilaments but different protofilament numbers can be found in some organisms and specialized cells. The cofactor is Mg(2+).

The protein resides in the cytoplasm. Its subcellular location is the cytoskeleton. The catalysed reaction is GTP + H2O = GDP + phosphate + H(+). In terms of biological role, tubulin is the major constituent of microtubules, a cylinder consisting of laterally associated linear protofilaments composed of alpha- and beta-tubulin heterodimers. Microtubules grow by the addition of GTP-tubulin dimers to the microtubule end, where a stabilizing cap forms. Below the cap, tubulin dimers are in GDP-bound state, owing to GTPase activity of alpha-tubulin. In Encephalitozoon cuniculi (strain GB-M1) (Microsporidian parasite), this protein is Tubulin alpha chain (TUB1).